We begin with the raw amino-acid sequence, 112 residues long: Large ribosomal subunit protein eL33y (112 aa).

It belongs to the eukaryotic ribosomal protein eL33 family.

The protein is Large ribosomal subunit protein eL33y (RPL35AC) of Arabidopsis thaliana (Mouse-ear cress).